A 343-amino-acid polypeptide reads, in one-letter code: Glyceraldehyde-3-phosphate dehydrogenase 1 (343 aa).

Residues 13-14 (RI), D35, R79, and S121 contribute to the NAD(+) site. D-glyceraldehyde 3-phosphate contacts are provided by residues 154–156 (SCT), T185, 214–215 (TG), and R237. Residue C155 is the Nucleophile of the active site. N319 is an NAD(+) binding site.

It belongs to the glyceraldehyde-3-phosphate dehydrogenase family. Homotetramer.

The protein localises to the cytoplasm. It catalyses the reaction D-glyceraldehyde 3-phosphate + phosphate + NAD(+) = (2R)-3-phospho-glyceroyl phosphate + NADH + H(+). It participates in carbohydrate degradation; glycolysis; pyruvate from D-glyceraldehyde 3-phosphate: step 1/5. Catalyzes the oxidative phosphorylation of glyceraldehyde 3-phosphate (G3P) to 1,3-bisphosphoglycerate (BPG) using the cofactor NAD. The first reaction step involves the formation of a hemiacetal intermediate between G3P and a cysteine residue, and this hemiacetal intermediate is then oxidized to a thioester, with concomitant reduction of NAD to NADH. The reduced NADH is then exchanged with the second NAD, and the thioester is attacked by a nucleophilic inorganic phosphate to produce BPG. In Nostoc sp. (strain PCC 7120 / SAG 25.82 / UTEX 2576), this protein is Glyceraldehyde-3-phosphate dehydrogenase 1 (gap1).